The chain runs to 387 residues: EP300-interacting inhibitor of differentiation 3 (387 aa).

The span at 1 to 19 (MSEEKCSLTGGEEKGEELA) shows a compositional bias: basic and acidic residues. The segment at 1-77 (MSEEKCSLTG…SDDLSPEAPC (77 aa)) is disordered. Positions 32-72 (EEDDDDDEEALKKEEEEEEEEEEEDEEEEEEGPDSSSDDLS) are enriched in acidic residues.

The protein belongs to the NSE4 family. In terms of assembly, component of the SMC5-SMC6 complex which consists at least of SMC5, SMC6, NSMCE2, NSMCE1, NSMCE4A or EID3 and NSMCE3. NSMCE1, NSMCE4A or EID3 and NSMCE3 probably form a subcomplex that bridges the head domains of the SMC5:SMC6 heterodimer. Homodimer, and heterodimer with EID2. Interacts with the C-terminal region of CREBBP.

The protein resides in the nucleus. The protein localises to the cytoplasm. Its subcellular location is the chromosome. It is found in the telomere. In terms of biological role, tissue-specific component of the SMC5-SMC6 complex, a complex involved in repair of DNA double-strand breaks by homologous recombination. The complex may promote sister chromatid homologous recombination by recruiting the SMC1-SMC3 cohesin complex to double-strand breaks. The complex is required for telomere maintenance via recombination and mediates sumoylation of shelterin complex (telosome) components. Its function is as follows. Acts as a repressor of nuclear receptor-dependent transcription possibly by interfering with CREBBP-dependent coactivation. May function as a coinhibitor of other CREBBP/EP300-dependent transcription factors. The sequence is that of EP300-interacting inhibitor of differentiation 3 from Rattus norvegicus (Rat).